A 309-amino-acid polypeptide reads, in one-letter code: MRIFFASSDSIALEVLRKVSDHYNVVGVLTAPDKPSGRGLFLKVNDIKVEAINRNITVLDPVVLNSDVIGMVKKLKPDLMLVFSYGKIFRQEFLDIFPMGCINVHPSLLPKYRGPSPIQTAILNGDTIGGITVQKMALEMDSGNILAQSQFEIKSFNTSADIFRYVSLNSFNLVLEALSKLNKGHIGIVQDSNQATYCSFFNKQHRMLNFNLSAFEIKNKINACNPWPLARAKLDKDEIIFHRADFIKTTDYSDQAIGKIVSFDPSKGILVKTEDGILLLLELQRSGRKVVDYKSFYNGNRDLIGKIFS.

107 to 110 lines the (6S)-5,6,7,8-tetrahydrofolate pocket; that stretch reads SLLP.

The protein belongs to the Fmt family.

The catalysed reaction is L-methionyl-tRNA(fMet) + (6R)-10-formyltetrahydrofolate = N-formyl-L-methionyl-tRNA(fMet) + (6S)-5,6,7,8-tetrahydrofolate + H(+). Functionally, attaches a formyl group to the free amino group of methionyl-tRNA(fMet). The formyl group appears to play a dual role in the initiator identity of N-formylmethionyl-tRNA by promoting its recognition by IF2 and preventing the misappropriation of this tRNA by the elongation apparatus. This chain is Methionyl-tRNA formyltransferase, found in Borrelia turicatae (strain 91E135).